A 70-amino-acid chain; its full sequence is Small ribosomal subunit protein bS21 (70 aa).

The interval 40–70 (KPTAERKRKHAAAVKRHYKRIRSQQLPPRLY) is disordered. Residues 45–61 (RKRKHAAAVKRHYKRIR) show a composition bias toward basic residues.

Belongs to the bacterial ribosomal protein bS21 family.

The sequence is that of Small ribosomal subunit protein bS21 from Bordetella parapertussis (strain 12822 / ATCC BAA-587 / NCTC 13253).